The following is a 617-amino-acid chain: Vacuolar protein sorting-associated protein 33B (617 aa).

Ala-2 carries the N-acetylalanine modification.

Belongs to the STXBP/unc-18/SEC1 family. In terms of assembly, interacts with RAB11A and VIPAS39. Associates with adaptor protein complex 3 (AP-3), clathrin:AP-3 and clathrin:HGS complexes. In terms of processing, phosphorylated on tyrosine residues. In terms of tissue distribution, ubiquitous.

It localises to the late endosome membrane. The protein localises to the lysosome membrane. Its subcellular location is the early endosome. It is found in the cytoplasmic vesicle. The protein resides in the clathrin-coated vesicle. It localises to the recycling endosome. May play a role in vesicle-mediated protein trafficking to lysosomal compartments and in membrane docking/fusion reactions of late endosomes/lysosomes. Mediates phagolysosomal fusion in macrophages. Proposed to be involved in endosomal maturation implicating VIPAS39. In epithelial cells, the VPS33B:VIPAS39 complex may play a role in the apical recycling pathway and in the maintenance of the apical-basolateral polarity. Seems to be involved in the sorting of specific cargos from the trans-Golgi network to alpha-granule-destined multivesicular bodies (MVBs) promoting MVBs maturation in megakaryocytes. This chain is Vacuolar protein sorting-associated protein 33B (Vps33b), found in Rattus norvegicus (Rat).